The primary structure comprises 485 residues: Glutamyl-tRNA(Gln) amidotransferase subunit A (485 aa).

Residues Lys-79 and Ser-154 each act as charge relay system in the active site. The active-site Acyl-ester intermediate is Ser-178.

Belongs to the amidase family. GatA subfamily. As to quaternary structure, heterotrimer of A, B and C subunits.

The enzyme catalyses L-glutamyl-tRNA(Gln) + L-glutamine + ATP + H2O = L-glutaminyl-tRNA(Gln) + L-glutamate + ADP + phosphate + H(+). Its function is as follows. Allows the formation of correctly charged Gln-tRNA(Gln) through the transamidation of misacylated Glu-tRNA(Gln) in organisms which lack glutaminyl-tRNA synthetase. The reaction takes place in the presence of glutamine and ATP through an activated gamma-phospho-Glu-tRNA(Gln). In Clostridium botulinum (strain Langeland / NCTC 10281 / Type F), this protein is Glutamyl-tRNA(Gln) amidotransferase subunit A.